Here is a 238-residue protein sequence, read N- to C-terminus: Small ribosomal subunit protein uS3 (238 aa).

The KH type-2 domain maps to 39-108 (IRKFVKKKLF…NVAVNVIEVK (70 aa)).

The protein belongs to the universal ribosomal protein uS3 family. In terms of assembly, part of the 30S ribosomal subunit. Forms a tight complex with proteins S10 and S14.

Functionally, binds the lower part of the 30S subunit head. Binds mRNA in the 70S ribosome, positioning it for translation. In Alkaliphilus oremlandii (strain OhILAs) (Clostridium oremlandii (strain OhILAs)), this protein is Small ribosomal subunit protein uS3.